A 301-amino-acid polypeptide reads, in one-letter code: Mitochondrial import receptor subunit TOM40 homolog (301 aa).

The interval 1–20 is disordered; it reads MATPTESEFAAPIPQTNPGS.

This sequence belongs to the Tom40 family. Forms part of the preprotein translocase complex of the outer mitochondrial membrane (TOM complex). Interacts with mitochondrial targeting sequences.

Its subcellular location is the mitochondrion outer membrane. In terms of biological role, channel-forming protein essential for import of protein precursors into mitochondria. Specifically required for nnt-1 accumulation in the mitochondria and may be involved in the secretion of daf-28/insulin from the mitochondria. Required for embryonic and larval development. This Caenorhabditis briggsae protein is Mitochondrial import receptor subunit TOM40 homolog.